The chain runs to 133 residues: Small ribosomal subunit protein uS8 (133 aa).

It belongs to the universal ribosomal protein uS8 family. As to quaternary structure, part of the 30S ribosomal subunit. Contacts proteins S5 and S12.

One of the primary rRNA binding proteins, it binds directly to 16S rRNA central domain where it helps coordinate assembly of the platform of the 30S subunit. The sequence is that of Small ribosomal subunit protein uS8 from Rhodopirellula baltica (strain DSM 10527 / NCIMB 13988 / SH1).